Here is a 1959-residue protein sequence, read N- to C-terminus: Zinc finger protein hangover (1959 aa).

A ZAD domain is found at 79-155; sequence NCCRLCIAPQ…FSSQAKQRQW (77 aa). 4 residues coordinate Zn(2+): Cys-81, Cys-84, Cys-128, and Cys-131. Positions 178 to 208 are disordered; it reads GFFDQHLHQQQQHHQHLENELEAEKEKATPT. Over residues 192–205 the composition is skewed to basic and acidic residues; it reads QHLENELEAEKEKA. Position 228 is a phosphoserine (Ser-228). Residue Thr-246 is modified to Phosphothreonine. The C2H2-type 1 zinc-finger motif lies at 318–341; that stretch reads ASCRACSLQFSTRANARRHERNLH. Residues 447–469 form a C2H2-type 2; degenerate zinc finger; sequence MTCRCCNKYFSTYKNFMAHVRKK. A C2H2-type 3 zinc finger spans residues 581 to 604; sequence YECKLCPKGFRTKHEFRTHVYDKH. A disordered region spans residues 674–762; that stretch reads AVSDNASTTG…ANRDASAPKS (89 aa). The span at 677–693 shows a compositional bias: polar residues; the sequence is DNASTTGSGMARSNSME. At Ser-680 the chain carries Phosphoserine. 2 stretches are compositionally biased toward low complexity: residues 716–727 and 741–759; these read SSSAAPPLTSTP and TSASAAAAAQSSANRDASA. C2H2-type zinc fingers lie at residues 770-793 and 801-824; these read QVCPICGQQYNNYNNVLRHMESKH and YKCVRCGLGYPRISYLREHMINVH. Residues Ser-832, Ser-894, Ser-895, Ser-898, and Ser-899 each carry the phosphoserine modification. The C2H2-type 6 zinc finger occupies 908–930; it reads KECPICNAVFSNNIGLSNHMRSH. The tract at residues 960–991 is disordered; sequence TDSELGVGGTMSESAPATPANVPPAMANQTPQ. 5 consecutive C2H2-type zinc fingers follow at residues 1011 to 1034, 1042 to 1065, 1078 to 1101, 1154 to 1176, and 1184 to 1207; these read MRCRICQRRFSSKKSYRYHMLTDH, IKCKLCNAEFAYEKGLKVHLFKVH, FECDVCSIVYSSESELQQHKRSVH, YQCKYCPSNFNTNKKLAIHINSH, and YSCKDCGNVYSGRKSLWVHRYKKH. Polar residues predominate over residues 1233–1253; the sequence is TPTCNRKPITSTGAHQQQDGQ. Residues 1233-1301 form a disordered region; the sequence is TPTCNRKPIT…GNGTTVGVAS (69 aa). Residues 1255 to 1267 show a composition bias toward basic residues; the sequence is HSHHTAKRTIFRH. The span at 1271–1283 shows a compositional bias: acidic residues; that stretch reads DDDDEEDDDEQQQ. 2 C2H2-type zinc fingers span residues 1318–1340 and 1375–1397; these read VACTICGARFTDQEHFSKHIQKH and YACDLCAKTFPQVIALKVHRKWH. Low complexity predominate over residues 1445–1467; sequence QQSLNNSCNSSMNHNNNSSSNRS. The disordered stretch occupies residues 1445 to 1471; that stretch reads QQSLNNSCNSSMNHNNNSSSNRSKSMK. 2 C2H2-type zinc fingers span residues 1476–1499 and 1552–1574; these read LKCEYCASTFISNNNLRRHMYELH and WGCDLCGEYLSRKEKLMNHINNH. The disordered stretch occupies residues 1627 to 1865; it reads AAGATTTDKL…STGERRKKAV (239 aa). Positions 1639-1695 are enriched in acidic residues; the sequence is PDEEDSDDLDEDSSGDDDDSSGTGDDDDDDDSDDDEDGEGEDEDEEGDGGEGEDEEG. Positions 1697–1715 are enriched in low complexity; the sequence is QPPAQLLPQQQHKTDLNLN. Acidic residues-rich tracts occupy residues 1716–1758 and 1782–1829; these read QDDD…EEPE and SDDE…EDEP. Residues 1833–1851 show a composition bias toward low complexity; that stretch reads STASFSESESSTTTTSNSH. The C2H2-type 16 zinc finger occupies 1873–1895; that stretch reads FTCDLCQLCFDSQELLQSHIKSH. Residues 1933 to 1959 form a disordered region; sequence PDSKSAVLANNNNSKTSSKTVAAGATN. Positions 1942-1952 are enriched in low complexity; the sequence is NNNNSKTSSKT.

Expressed ubiquitously in the nervous system, in neurons not glia.

The protein resides in the nucleus. Its function is as follows. Required for normal development of ethanol tolerance. Relies on two distinct molecular pathways: a cellular stress pathway defined by hang, and a parallel pathway requiring octopamine. This chain is Zinc finger protein hangover (hang), found in Drosophila melanogaster (Fruit fly).